The primary structure comprises 212 residues: Imidazole glycerol phosphate synthase subunit HisH (212 aa).

The Glutamine amidotransferase type-1 domain occupies 2–212; it reads LTAIIDYESG…MIGNFLTWTP (211 aa). Catalysis depends on C87, which acts as the Nucleophile. Active-site residues include H192 and E194.

Heterodimer of HisH and HisF.

It localises to the cytoplasm. The enzyme catalyses 5-[(5-phospho-1-deoxy-D-ribulos-1-ylimino)methylamino]-1-(5-phospho-beta-D-ribosyl)imidazole-4-carboxamide + L-glutamine = D-erythro-1-(imidazol-4-yl)glycerol 3-phosphate + 5-amino-1-(5-phospho-beta-D-ribosyl)imidazole-4-carboxamide + L-glutamate + H(+). It carries out the reaction L-glutamine + H2O = L-glutamate + NH4(+). Its pathway is amino-acid biosynthesis; L-histidine biosynthesis; L-histidine from 5-phospho-alpha-D-ribose 1-diphosphate: step 5/9. In terms of biological role, IGPS catalyzes the conversion of PRFAR and glutamine to IGP, AICAR and glutamate. The HisH subunit catalyzes the hydrolysis of glutamine to glutamate and ammonia as part of the synthesis of IGP and AICAR. The resulting ammonia molecule is channeled to the active site of HisF. This Ruegeria pomeroyi (strain ATCC 700808 / DSM 15171 / DSS-3) (Silicibacter pomeroyi) protein is Imidazole glycerol phosphate synthase subunit HisH.